Here is a 217-residue protein sequence, read N- to C-terminus: HTH-type transcriptional regulator EthR (217 aa).

Positions 1–22 (MTTASQTRTPRGRRSARPSGDD) are disordered. The HTH tetR-type domain occupies 21–81 (DDREAAILAT…SLIDPLIKRA (61 aa)). Positions 44-63 (SVDDLAKGAGISRPTFYFYF) form a DNA-binding region, H-T-H motif.

Homodimer.

Its function is as follows. Involved in the repression of teh monooxygenase EthA which is responsible of the formation of the active metabolite of ethionamide (ETH). The chain is HTH-type transcriptional regulator EthR (ethR) from Mycolicibacterium smegmatis (strain ATCC 700084 / mc(2)155) (Mycobacterium smegmatis).